The sequence spans 134 residues: Small ribosomal subunit protein uS8c (134 aa).

This sequence belongs to the universal ribosomal protein uS8 family. In terms of assembly, part of the 30S ribosomal subunit.

The protein resides in the plastid. It is found in the chloroplast. Its function is as follows. One of the primary rRNA binding proteins, it binds directly to 16S rRNA central domain where it helps coordinate assembly of the platform of the 30S subunit. The chain is Small ribosomal subunit protein uS8c (rps8) from Daucus carota (Wild carrot).